We begin with the raw amino-acid sequence, 78 residues long: Large ribosomal subunit protein eL20 (78 aa).

The protein belongs to the eukaryotic ribosomal protein eL20 family. As to quaternary structure, part of the 50S ribosomal subunit. Binds 23S rRNA.

This Pyrobaculum calidifontis (strain DSM 21063 / JCM 11548 / VA1) protein is Large ribosomal subunit protein eL20.